The following is a 114-amino-acid chain: DNA-directed RNA polymerases II, IV and V subunit 9B (114 aa).

Residues C7, C10, C29, C32, C76, C79, C103, and C108 each contribute to the Zn(2+) site. The TFIIS-type zinc-finger motif lies at K72–R113.

It belongs to the archaeal RpoM/eukaryotic RPA12/RPB9/RPC11 RNA polymerase family. In terms of assembly, component of the RNA polymerase II, IV and V complexes. Interacts with NRPD1.

It localises to the nucleus. The protein localises to the nucleolus. In terms of biological role, DNA-dependent RNA polymerase catalyzes the transcription of DNA into RNA using the four ribonucleoside triphosphates as substrates. Component of RNA polymerase II which synthesizes mRNA precursors and many functional non-coding RNAs. Pol II is the central component of the basal RNA polymerase II transcription machinery. It is composed of mobile elements that move relative to each other. Component of RNA polymerases IV and V which mediate short-interfering RNAs (siRNA) accumulation and subsequent RNA-directed DNA methylation-dependent (RdDM) transcriptional gene silencing (TGS) of endogenous repeated sequences, including transposable elements. Required for RNA silencing. The protein is DNA-directed RNA polymerases II, IV and V subunit 9B (NRPB9B) of Arabidopsis thaliana (Mouse-ear cress).